The sequence spans 3993 residues: Intermembrane lipid transfer protein VPS13B (3993 aa).

The region spanning 2–102 (LESYVTPILM…KDGIQDDHES (101 aa)) is the Chorein N-terminal domain. Residues 100–133 (HESCGSNSTNRSTAENTKSSIKPRRIQQAAPADP) form a disordered region. Positions 103–119 (CGSNSTNRSTAENTKSS) are enriched in polar residues. Phosphoserine is present on residues Ser413, Ser998, Ser1001, and Ser1032. Disordered regions lie at residues 1262–1303 (SPVW…PFSD), 1616–1637 (DQLK…ERNS), and 1735–1770 (TKAT…DSGI). The segment covering 1264–1291 (VWSSVGTAPPDTSTCSPSADIGTTTEGD) has biased composition (polar residues). Positions 1739-1750 (EISKQEQKKVDT) are enriched in basic and acidic residues. The span at 1756-1770 (AETSSRYSGAQDSGI) shows a compositional bias: polar residues. Phosphoserine is present on Ser1789. The interval 2048-2067 (HSSAHSKETSTPSDSILNMD) is disordered. One can recognise an SHR-BD domain in the interval 2604–2683 (HFVICNDTQE…TIQYKGRTAS (80 aa)). A localizes the protein to the Golgi apparatus region spans residues 3880–3993 (AFPITEISCA…KNKALRKGFS (114 aa)).

This sequence belongs to the VPS13 family. As to quaternary structure, interacts with STX6. Interacts with STX12 (via N-terminus). Interacts with RAB6A isoform 1 (GTP-bound) and isoform 2 (GTP-bound). Interacts with RAB6B (GTP-bound). In terms of tissue distribution, ubiquitously expressed in all examined tissues.

The protein localises to the recycling endosome membrane. It localises to the cytoplasmic vesicle. It is found in the secretory vesicle. Its subcellular location is the acrosome membrane. The protein resides in the golgi apparatus. The protein localises to the cis-Golgi network membrane. It localises to the endoplasmic reticulum-Golgi intermediate compartment membrane. It is found in the trans-Golgi network membrane. Its subcellular location is the early endosome membrane. The protein resides in the lysosome membrane. Functionally, mediates the transfer of lipids between membranes at organelle contact sites. Binds phosphatidylinositol 3-phosphate. Functions as a tethering factor in the slow endocytic recycling pathway, to assist traffic between early and recycling endosomes. Involved in the transport of proacrosomal vesicles to the nuclear dense lamina (NDL) during spermatid development. Plays a role in the assembly of the Golgi apparatus, possibly by mediating trafficking to the Golgi membrane. Plays a role in the development of the nervous system, and may be required for neuron projection development. May also play a role during adipose tissue development. Required for maintenance of the ocular lens. Required for proper organization of the Golgi. The sequence is that of Intermembrane lipid transfer protein VPS13B from Mus musculus (Mouse).